We begin with the raw amino-acid sequence, 724 residues long: Catalase-peroxidase (724 aa).

The tryptophyl-tyrosyl-methioninium (Trp-Tyr) (with M-252) cross-link spans 98-226; the sequence is WHAAGSYRTA…LAAVQMGLIY (129 aa). The active-site Proton acceptor is histidine 99. The segment at residues 226–252 is a cross-link (tryptophyl-tyrosyl-methioninium (Tyr-Met) (with W-98)); it reads YVNPQGVNGEPDPLRTALHVRETFARM. A heme b-binding site is contributed by histidine 267.

It belongs to the peroxidase family. Peroxidase/catalase subfamily. As to quaternary structure, homodimer or homotetramer. Requires heme b as cofactor. In terms of processing, formation of the three residue Trp-Tyr-Met cross-link is important for the catalase, but not the peroxidase activity of the enzyme.

The enzyme catalyses H2O2 + AH2 = A + 2 H2O. It catalyses the reaction 2 H2O2 = O2 + 2 H2O. In terms of biological role, bifunctional enzyme with both catalase and broad-spectrum peroxidase activity. The protein is Catalase-peroxidase of Cereibacter sphaeroides (strain ATCC 17025 / ATH 2.4.3) (Rhodobacter sphaeroides).